The sequence spans 449 residues: Ras-related GTP-binding protein D (449 aa).

The tract at residues 1-55 (MSQVLGKPQPQGEDGGEDQEEDELVGLAGYEDGPESSDAELDSGPEEGESRRNSW) is disordered. Acidic residues-rich tracts occupy residues 14 to 24 (DGGEDQEEDEL) and 32 to 47 (DGPE…GPEE). GTP-binding residues include arginine 120, arginine 121, serine 122, glycine 123, lysine 124, serine 125, serine 126, and threonine 140. GDP contacts are provided by arginine 121, serine 122, glycine 123, lysine 124, serine 125, serine 126, threonine 140, glutamate 144, and threonine 146. 5 residues coordinate GTP: threonine 146, glycine 169, histidine 228, lysine 229, and aspartate 231. 5 residues coordinate GDP: histidine 228, lysine 229, aspartate 231, serine 269, and isoleucine 270. A GTP-binding site is contributed by isoleucine 270. The segment at 428–449 (KAQSRLPKKTGATPNGTPRVLL) is disordered.

The protein belongs to the GTR/RAG GTP-binding protein family. As to quaternary structure, forms a heterodimer with RRAGA in a sequence-independent manner and RRAGB. Heterodimerization stabilizes RRAG proteins. The GDP-bound form of RRAGD (in complex with the GTP-bound form of RRAGA or RRAGB), interacts with RPTOR, thereby promoting recruitment of mTORC1 to the lysosomes. Component of the lysosomal folliculin complex (LFC), composed of FLCN, FNIP1 (or FNIP2), RagA/RRAGA or RagB/RRAGB GDP-bound, RagC/RRAGC or RagD/RRAGD GTP-bound, and Ragulator. Interacts with NOL8. Interacts with SH3BP4; the interaction with this negative regulator is most probably direct, preferentially occurs with the inactive GDP-bound form of RRAGD and is negatively regulated by amino acids. The Rag heterodimer interacts with SLC38A9; the probable amino acid sensor. Interacts with SESN1, SESN2 and SESN3. The GDP-bound form interacts with TFEB. The GDP-bound form interacts with TFE3. As to expression, expressed in the distal tubule of the kidney.

It is found in the cytoplasm. The protein resides in the nucleus. It localises to the lysosome membrane. It catalyses the reaction GTP + H2O = GDP + phosphate + H(+). With respect to regulation, the activation of RagD/RRAGD is mediated by a GTPase activating protein (GAP). In high-amino acid conditions, activated by GTPase activating protein FLCN that stimulates RRAGD GTPase activity to turn it into its active GDP-bound form. In response to amino acid depletion, the GATOR1 complex inactivates RagC/RRAGC by securing the GTP-bound inactive form. Functionally, guanine nucleotide-binding protein that plays a crucial role in the cellular response to amino acid availability through regulation of the mTORC1 signaling cascade. Forms heterodimeric Rag complexes with RagA/RRAGA or RagB/RRAGB and cycles between an inactive GTP-bound and an active GDP-bound form: RagD/RRAGD is in its active form when GDP-bound RagD/RRAGD forms a complex with GTP-bound RagA/RRAGA (or RagB/RRAGB) and in an inactive form when GTP-bound RagD/RRAGD heterodimerizes with GDP-bound RagA/RRAGA (or RagB/RRAGB). In its active form, promotes the recruitment of mTORC1 to the lysosomes and its subsequent activation by the GTPase RHEB. This is a crucial step in the activation of the MTOR signaling cascade by amino acids. Also plays a central role in the non-canonical mTORC1 complex, which acts independently of RHEB and specifically mediates phosphorylation of MiT/TFE factors TFEB and TFE3: GDP-bound RagD/RRAGD mediates recruitment of MiT/TFE factors TFEB and TFE3. The polypeptide is Ras-related GTP-binding protein D (Mus musculus (Mouse)).